A 184-amino-acid polypeptide reads, in one-letter code: MQGPHDFHTPKSSYSKEDLLESGKGGYFGPGNAQLPAPPMLMMDRITEISLDGGAFGKGHVVGELDITPDLWFFQCHFPGDPVMPGCLGLDAMWQIVGYWLGWSGSPGKGRALGVGEVKFTGEITPDKKLVRYEIDIKRVRRGKLNLGIADGRVYVDGEHVYTAIDMKVGLKNVLGGAGDLPAS.

Histidine 77 is an active-site residue.

Belongs to the thioester dehydratase family. FabA subfamily. As to quaternary structure, homodimer.

It is found in the cytoplasm. The catalysed reaction is a (3R)-hydroxyacyl-[ACP] = a (2E)-enoyl-[ACP] + H2O. The enzyme catalyses (3R)-hydroxydecanoyl-[ACP] = (2E)-decenoyl-[ACP] + H2O. It catalyses the reaction (2E)-decenoyl-[ACP] = (3Z)-decenoyl-[ACP]. The protein operates within lipid metabolism; fatty acid biosynthesis. In terms of biological role, necessary for the introduction of cis unsaturation into fatty acids. Catalyzes the dehydration of (3R)-3-hydroxydecanoyl-ACP to E-(2)-decenoyl-ACP and then its isomerization to Z-(3)-decenoyl-ACP. Can catalyze the dehydratase reaction for beta-hydroxyacyl-ACPs with saturated chain lengths up to 16:0, being most active on intermediate chain length. The protein is 3-hydroxydecanoyl-[acyl-carrier-protein] dehydratase of Hyphomonas neptunium (strain ATCC 15444).